The following is a 218-amino-acid chain: Flagellin B1 (218 aa).

Residues 1–12 constitute a propeptide that is removed on maturation; that stretch reads MNIKEFLSNKKG. Asn-38, Asn-71, Asn-77, Asn-115, and Asn-136 each carry an N-linked (GlcNAc...) asparagine glycan.

Belongs to the archaeal flagellin family. N-linked glycans consist of the 779 Da trisaccharide beta-ManNAc(Thr)-(1-4)-beta-GlcNAc3NAcA-(1-3)-beta-GlcNAc.

It localises to the archaeal flagellum. Its function is as follows. Flagellin is the subunit protein which polymerizes to form the filaments of archaeal flagella. The protein is Flagellin B1 (flaB1) of Methanococcus voltae.